A 222-amino-acid chain; its full sequence is ATP-dependent dethiobiotin synthetase BioD (222 aa).

ATP is bound at residue 12–17; the sequence is DVGKTF. Thr-16 is a binding site for Mg(2+). Lys-37 is an active-site residue. Position 41 (Ser-41) interacts with substrate. ATP-binding positions include Asp-54 and 113–116; that span reads EGAG. Residues Asp-54 and Glu-113 each coordinate Mg(2+).

The protein belongs to the dethiobiotin synthetase family. As to quaternary structure, homodimer. Mg(2+) is required as a cofactor.

The protein localises to the cytoplasm. It catalyses the reaction (7R,8S)-7,8-diammoniononanoate + CO2 + ATP = (4R,5S)-dethiobiotin + ADP + phosphate + 3 H(+). Its pathway is cofactor biosynthesis; biotin biosynthesis; biotin from 7,8-diaminononanoate: step 1/2. Functionally, catalyzes a mechanistically unusual reaction, the ATP-dependent insertion of CO2 between the N7 and N8 nitrogen atoms of 7,8-diaminopelargonic acid (DAPA, also called 7,8-diammoniononanoate) to form a ureido ring. The polypeptide is ATP-dependent dethiobiotin synthetase BioD (Anoxybacillus flavithermus (strain DSM 21510 / WK1)).